Reading from the N-terminus, the 659-residue chain is Threonine--tRNA ligase (659 aa).

The 64-residue stretch at 7–70 folds into the TGS domain; that stretch reads VQATVTVTFP…TDDATVEIIT (64 aa). The catalytic stretch occupies residues 255–557; sequence DHRKLGAELE…LIEHTAGNFP (303 aa). Residues C353, H404, and H534 each coordinate Zn(2+).

This sequence belongs to the class-II aminoacyl-tRNA synthetase family. In terms of assembly, homodimer. The cofactor is Zn(2+).

Its subcellular location is the cytoplasm. It catalyses the reaction tRNA(Thr) + L-threonine + ATP = L-threonyl-tRNA(Thr) + AMP + diphosphate + H(+). Catalyzes the attachment of threonine to tRNA(Thr) in a two-step reaction: L-threonine is first activated by ATP to form Thr-AMP and then transferred to the acceptor end of tRNA(Thr). Also edits incorrectly charged L-seryl-tRNA(Thr). In Chlorobium phaeobacteroides (strain BS1), this protein is Threonine--tRNA ligase.